Consider the following 105-residue polypeptide: Blood plasma apolipoprotein LAL1 (105 aa).

Positions M1 to S21 are cleaved as a signal peptide. A propeptide spanning residues E22–S29 is cleaved from the precursor.

In terms of tissue distribution, plasma.

The protein localises to the secreted. This is Blood plasma apolipoprotein LAL1 from Petromyzon marinus (Sea lamprey).